Reading from the N-terminus, the 834-residue chain is U-box domain-containing protein 33 (834 aa).

A disordered region spans residues 232 to 308 (FSTPESEHQH…SPSSFPDGVD (77 aa)). Composition is skewed to polar residues over residues 243–273 (SRVQ…GSLN) and 284–293 (SEVTGSATVM). Positions 334–462 (LRRQKAEKNA…SHAETSTLQL (129 aa)) form a coiled coil. Residues 481-744 (FDSTLKIGEG…EVWRVLEPMR (264 aa)) form the Protein kinase domain. Residues 487–495 (IGEGGYGSI) and Lys508 contribute to the ATP site. Residue Asp603 is the Proton acceptor of the active site. One can recognise a U-box domain in the interval 762–834 (IAPPYFICPI…AIQEWLQHHL (73 aa)).

This sequence belongs to the protein kinase superfamily. Ser/Thr protein kinase family.

It carries out the reaction L-seryl-[protein] + ATP = O-phospho-L-seryl-[protein] + ADP + H(+). It catalyses the reaction L-threonyl-[protein] + ATP = O-phospho-L-threonyl-[protein] + ADP + H(+). The enzyme catalyses S-ubiquitinyl-[E2 ubiquitin-conjugating enzyme]-L-cysteine + [acceptor protein]-L-lysine = [E2 ubiquitin-conjugating enzyme]-L-cysteine + N(6)-ubiquitinyl-[acceptor protein]-L-lysine.. It participates in protein modification; protein ubiquitination. Functionally, functions as an E3 ubiquitin ligase. This chain is U-box domain-containing protein 33 (PUB33), found in Arabidopsis thaliana (Mouse-ear cress).